We begin with the raw amino-acid sequence, 591 residues long: ATPase family AAA domain-containing protein 3A (591 aa).

Positions 1–52 (MSWLFGIKGPKGEGTGPPLPLPPAQPGAEGGGDRGAGDRPSPKDKWSNFDPT) are disordered. S2 bears the N-acetylserine mark. The interval 2–49 (SWLFGIKGPKGEGTGPPLPLPPAQPGAEGGGDRGAGDRPSPKDKWSNF) is required for interaction with the inner surface of the mitochondrial outer membrane. Residues 2–245 (SWLFGIKGPK…FRAFVTDWDK (244 aa)) lie on the Mitochondrial intermembrane side of the membrane. Residues 31 to 47 (GGDRGAGDRPSPKDKWS) show a composition bias toward basic and acidic residues. Residues 55 to 216 (ERAAKAAREL…REQIRLKAAE (162 aa)) are a coiled coil. The helical transmembrane segment at 246–263 (VTATVAGLTLLAVGVYSA) threads the bilayer. Residues 264 to 586 (KNATSVAGRY…DSQTNKPPHP (323 aa)) lie on the Mitochondrial matrix side of the membrane. The tract at residues 289–304 (RISVLEALRHPIQVSR) is S100B-binding. 351 to 358 (GPPGTGKT) provides a ligand contact to ATP. K490 is modified (N6-acetyllysine; alternate). At K490 the chain carries N6-succinyllysine; alternate. K494 and K512 each carry N6-acetyllysine. Positions 572-591 (KVERPDSQTNKPPHPSLLSC) are disordered.

This sequence belongs to the AAA ATPase family. In terms of assembly, can form homooligomers. Homodimer formation at the N-terminus may be regulated by ATP and is required for the interaction with the inner surface of the mitochondrial outer membrane and correct mitochondrial homeostasis. Interacts with components of the mitochondrial ribosome and with other proteins involved in mitochondrial RNA metabolism. May also interact with protein involved in lipid metabolism, including STARD9. May interact with FAM210A. Interacts with GADD45GIP1. Interacts with S100B in a Ca(+2)- and Zn(+2)-dependent manner; this interaction probably occurs in the cytosol prior to mitochondrial targeting. S100B could assist ATAD3A cytoplasmic processing, preventing aggregation and favoring mitochondrial localization. Interacts with HSP60/HSPD1. Interacts with CLPB. Interacts with EIF2AK3/PERK; ATAD3A and EIF2S1/eIF-2-alpha occupy a common binding site within the cytoplasmic loop of EIF2AK3/PERK, leading to prevent EIF2AK3/PERK association with its substrate EIF2S1/eIF-2-alpha. Expressed in heart, spleen, kidney, liver and at smaller levels, in lung and muscle (at protein level).

It is found in the mitochondrion inner membrane. The protein resides in the mitochondrion matrix. It localises to the mitochondrion nucleoid. The enzyme catalyses ATP + H2O = ADP + phosphate + H(+). Functionally, essential for mitochondrial network organization, mitochondrial metabolism and cell growth at organism and cellular level. May play an important role in mitochondrial protein synthesis. May also participate in mitochondrial DNA replication. May bind to mitochondrial DNA D-loops and contribute to nucleoid stability. Required for enhanced channeling of cholesterol for hormone-dependent steroidogenesis. Involved in mitochondrial-mediated antiviral innate immunity. Required to protect mitochondria from the PERK-mediated unfolded protein response: specifically inhibits the activity of EIF2AK3/PERK at mitochondria-endoplasmic reticulum contact sites, thereby providing a safe haven for mitochondrial protein translation during endoplasmic reticulum stress. Ability to inhibit EIF2AK3/PERK is independent of its ATPase activity. Also involved in the mitochondrial DNA damage response by promoting signaling between damaged genomes and the mitochondrial membrane, leading to activation of the integrated stress response (ISR). The sequence is that of ATPase family AAA domain-containing protein 3A (Atad3a) from Mus musculus (Mouse).